A 196-amino-acid polypeptide reads, in one-letter code: Regulator of G-protein signaling 1 (196 aa).

A disordered region spans residues 1 to 27; the sequence is MPGMFFSANPKDLKGTDQSLLDDKTQK. Basic and acidic residues predominate over residues 11 to 25; it reads KDLKGTDQSLLDDKT. Residues 72-187 form the RGS domain; the sequence is SLEKLLANQT…LKSNIYLNLL (116 aa).

In terms of assembly, interacts with GNAI1 and GNAQ.

It localises to the cell membrane. The protein resides in the cytoplasm. Its subcellular location is the cytosol. In terms of biological role, regulates G protein-coupled receptor signaling cascades, including signaling downstream of the N-formylpeptide chemoattractant receptors and leukotriene receptors. Inhibits B cell chemotaxis toward CXCL12. Inhibits signal transduction by increasing the GTPase activity of G protein alpha subunits, thereby driving them into their inactive GDP-bound form. This is Regulator of G-protein signaling 1 (RGS1) from Equus caballus (Horse).